A 302-amino-acid polypeptide reads, in one-letter code: tRNA dimethylallyltransferase (302 aa).

9-16 (GPTAAGKS) serves as a coordination point for ATP. A substrate-binding site is contributed by 11 to 16 (TAAGKS). The tract at residues 34–37 (DSRQ) is interaction with substrate tRNA.

This sequence belongs to the IPP transferase family. In terms of assembly, monomer. It depends on Mg(2+) as a cofactor.

It catalyses the reaction adenosine(37) in tRNA + dimethylallyl diphosphate = N(6)-dimethylallyladenosine(37) in tRNA + diphosphate. Its function is as follows. Catalyzes the transfer of a dimethylallyl group onto the adenine at position 37 in tRNAs that read codons beginning with uridine, leading to the formation of N6-(dimethylallyl)adenosine (i(6)A). In Gloeobacter violaceus (strain ATCC 29082 / PCC 7421), this protein is tRNA dimethylallyltransferase.